Reading from the N-terminus, the 152-residue chain is UPF0178 protein Shewmr7_1635 (152 aa).

The protein belongs to the UPF0178 family.

The protein is UPF0178 protein Shewmr7_1635 of Shewanella sp. (strain MR-7).